A 435-amino-acid polypeptide reads, in one-letter code: Polyadenylate-binding protein RBP47B (435 aa).

Over residues 1 to 15 (MQTTNGSDSTLATSG) the composition is skewed to polar residues. Disordered stretches follow at residues 1-41 (MQTT…QQWM) and 85-104 (YGSY…RGSG). Low complexity predominate over residues 29-41 (QWQQQQQQQQQWM). RRM domains follow at residues 108–188 (KTLW…WASF), 202–281 (LSVF…IATP), and 321–393 (ATIF…WGRS). The interval 392 to 412 (RSPNKQWRGDSGQQWNGGYSR) is disordered.

Belongs to the polyadenylate-binding RBP47 family. As to quaternary structure, interacts with the poly(A) tail of mRNA in nucleus. In terms of tissue distribution, expressed at low levels in leaves, stems, flowers, and seedlings.

The protein resides in the nucleus. It localises to the cytoplasmic granule. Functionally, heterogeneous nuclear ribonucleoprotein (hnRNP)-protein binding the poly(A) tail of mRNA and probably involved in some steps of pre-mRNA maturation. The sequence is that of Polyadenylate-binding protein RBP47B (RBP47B) from Arabidopsis thaliana (Mouse-ear cress).